Consider the following 291-residue polypeptide: Pantothenate synthetase 1 (291 aa).

Catalysis depends on His37, which acts as the Proton donor. 147-150 contributes to the ATP binding site; it reads GEKD. Gln153 is a binding site for (R)-pantoate. 184–187 contacts ATP; the sequence is ISSR.

The protein belongs to the pantothenate synthetase family. Homodimer.

The protein resides in the cytoplasm. The catalysed reaction is (R)-pantoate + beta-alanine + ATP = (R)-pantothenate + AMP + diphosphate + H(+). It participates in cofactor biosynthesis; (R)-pantothenate biosynthesis; (R)-pantothenate from (R)-pantoate and beta-alanine: step 1/1. In terms of biological role, catalyzes the condensation of pantoate with beta-alanine in an ATP-dependent reaction via a pantoyl-adenylate intermediate. The chain is Pantothenate synthetase 1 from Frankia alni (strain DSM 45986 / CECT 9034 / ACN14a).